A 533-amino-acid chain; its full sequence is 2,3-bisphosphoglycerate-independent phosphoglycerate mutase (533 aa).

Mn(2+) contacts are provided by Asp-15 and Ser-65. Ser-65 (phosphoserine intermediate) is an active-site residue. Residues His-126, 156–157 (RD), Arg-188, Arg-194, 258–261 (RPDR), and Lys-331 contribute to the substrate site. 5 residues coordinate Mn(2+): Asp-398, His-402, Asp-439, His-440, and His-457.

This sequence belongs to the BPG-independent phosphoglycerate mutase family. As to quaternary structure, monomer. The cofactor is Mn(2+).

The enzyme catalyses (2R)-2-phosphoglycerate = (2R)-3-phosphoglycerate. The protein operates within carbohydrate degradation; glycolysis; pyruvate from D-glyceraldehyde 3-phosphate: step 3/5. In terms of biological role, catalyzes the interconversion of 2-phosphoglycerate and 3-phosphoglycerate. This chain is 2,3-bisphosphoglycerate-independent phosphoglycerate mutase, found in Nostoc sp. (strain PCC 7120 / SAG 25.82 / UTEX 2576).